The sequence spans 141 residues: Hemoglobin subunit alpha-1 (141 aa).

The Globin domain maps to 1–141 (VLTEDDKNHI…VAKTLVAHYR (141 aa)). His-58 contacts O2. His-87 contacts heme b.

It belongs to the globin family. As to quaternary structure, heterotetramer of two alpha chains and two beta chains. As to expression, red blood cells.

Its function is as follows. Involved in oxygen transport from the lung to the various peripheral tissues. This Iguana iguana (Common iguana) protein is Hemoglobin subunit alpha-1.